A 338-amino-acid chain; its full sequence is Heat-inducible transcription repressor HrcA (338 aa).

This sequence belongs to the HrcA family.

In terms of biological role, negative regulator of class I heat shock genes (grpE-dnaK-dnaJ and groELS operons). Prevents heat-shock induction of these operons. This chain is Heat-inducible transcription repressor HrcA, found in Streptomyces avermitilis (strain ATCC 31267 / DSM 46492 / JCM 5070 / NBRC 14893 / NCIMB 12804 / NRRL 8165 / MA-4680).